Consider the following 398-residue polypeptide: Peptidyl-prolyl cis-trans isomerase D (398 aa).

In terms of domain architecture, PPIase cyclophilin-type spans 21–185 (FGSSPASRPG…EDVKIVDCGE (165 aa)). TPR repeat units follow at residues 229–262 (GLAL…LQLH), 282–323 (TSIQ…PSTE), and 335–368 (AKAF…APED).

It belongs to the cyclophilin-type PPIase family. PPIase D subfamily.

It is found in the cytoplasm. The enzyme catalyses [protein]-peptidylproline (omega=180) = [protein]-peptidylproline (omega=0). Functionally, PPIases accelerate the folding of proteins. It catalyzes the cis-trans isomerization of proline imidic peptide bonds in oligopeptides. The sequence is that of Peptidyl-prolyl cis-trans isomerase D (CPR6) from Mycosarcoma maydis (Corn smut fungus).